The chain runs to 72 residues: Translation initiation factor IF-1 (72 aa).

One can recognise an S1-like domain in the interval 1-72 (MAKKDVIELE…TRGRITWRKK (72 aa)).

The protein belongs to the IF-1 family. Component of the 30S ribosomal translation pre-initiation complex which assembles on the 30S ribosome in the order IF-2 and IF-3, IF-1 and N-formylmethionyl-tRNA(fMet); mRNA recruitment can occur at any time during PIC assembly.

It is found in the cytoplasm. Functionally, one of the essential components for the initiation of protein synthesis. Stabilizes the binding of IF-2 and IF-3 on the 30S subunit to which N-formylmethionyl-tRNA(fMet) subsequently binds. Helps modulate mRNA selection, yielding the 30S pre-initiation complex (PIC). Upon addition of the 50S ribosomal subunit IF-1, IF-2 and IF-3 are released leaving the mature 70S translation initiation complex. This chain is Translation initiation factor IF-1, found in Clostridioides difficile (strain 630) (Peptoclostridium difficile).